Reading from the N-terminus, the 439-residue chain is (p)ppApp synthetase toxin Tas1 (439 aa).

Its subcellular location is the secreted. It catalyses the reaction AMP + ATP = adenosine 3'-diphosphate,5'-phosphate + AMP + H(+). It carries out the reaction ADP + ATP = adenosine 3'-diphosphate,5'-diphosphate + AMP. The catalysed reaction is 2 ATP = adenosine 3'-diphosphate,5'-triphosphate + AMP. Functionally, type VI secretion exported toxin that pyrophosphorylates adenosine nucleotides to produce (p)ppApp. Thereby, depletes cellular ADP and ATP to dysregulate central metabolism in competitor cells. The chain is (p)ppApp synthetase toxin Tas1 (tas1) from Pseudomonas aeruginosa (strain UCBPP-PA14).